The primary structure comprises 154 residues: Egg-lysin (154 aa).

An N-terminal signal peptide occupies residues 1-18 (MKLLVLCIFAMMATLAMS).

In terms of assembly, monomer. Homodimer. Molecules associate into dimers and then rapidly dissociate again. Interacts (as a monomer) with the egg vitelline layer protein VERL (via VERL repeats); each VERL chain can bind multiple copies of lysin. As to expression, sperm (at protein level).

The protein localises to the cytoplasmic vesicle. Its subcellular location is the secretory vesicle. It is found in the acrosome lumen. Creates a 3 um hole in the egg vitelline layer through which the sperm passes. Does not have enzyme activity. Species-specific interaction between the sperm protein lysin and the egg protein VERL exposes a basic surface on lysin that may dissociate the egg vitelline layer via electrostatic repulsion. Plays a role in ensuring species-specific fertilization. The chain is Egg-lysin from Haliotis rufescens (California red abalone).